A 357-amino-acid chain; its full sequence is N-acetyl-gamma-glutamyl-phosphate reductase (357 aa).

The active site involves C160.

It belongs to the NAGSA dehydrogenase family. Type 1 subfamily.

The protein localises to the cytoplasm. The enzyme catalyses N-acetyl-L-glutamate 5-semialdehyde + phosphate + NADP(+) = N-acetyl-L-glutamyl 5-phosphate + NADPH + H(+). It functions in the pathway amino-acid biosynthesis; L-arginine biosynthesis; N(2)-acetyl-L-ornithine from L-glutamate: step 3/4. In terms of biological role, catalyzes the NADPH-dependent reduction of N-acetyl-5-glutamyl phosphate to yield N-acetyl-L-glutamate 5-semialdehyde. The chain is N-acetyl-gamma-glutamyl-phosphate reductase from Synechococcus sp. (strain CC9605).